A 113-amino-acid polypeptide reads, in one-letter code: Putative insulin-like growth factor 2-associated protein (113 aa).

In terms of tissue distribution, expressed in fetal and adult liver.

The chain is Putative insulin-like growth factor 2-associated protein from Homo sapiens (Human).